A 158-amino-acid polypeptide reads, in one-letter code: Ecotin-like protein 2 (158 aa).

Belongs to the protease inhibitor I11 (ecotin) family.

The protein is Ecotin-like protein 2 of Leishmania major.